We begin with the raw amino-acid sequence, 393 residues long: NAD(P)H-quinone oxidoreductase subunit H, chloroplastic (393 aa).

The protein belongs to the complex I 49 kDa subunit family. As to quaternary structure, NDH is composed of at least 16 different subunits, 5 of which are encoded in the nucleus.

The protein resides in the plastid. Its subcellular location is the chloroplast thylakoid membrane. The catalysed reaction is a plastoquinone + NADH + (n+1) H(+)(in) = a plastoquinol + NAD(+) + n H(+)(out). It catalyses the reaction a plastoquinone + NADPH + (n+1) H(+)(in) = a plastoquinol + NADP(+) + n H(+)(out). NDH shuttles electrons from NAD(P)H:plastoquinone, via FMN and iron-sulfur (Fe-S) centers, to quinones in the photosynthetic chain and possibly in a chloroplast respiratory chain. The immediate electron acceptor for the enzyme in this species is believed to be plastoquinone. Couples the redox reaction to proton translocation, and thus conserves the redox energy in a proton gradient. In Arabis hirsuta (Hairy rock-cress), this protein is NAD(P)H-quinone oxidoreductase subunit H, chloroplastic.